The primary structure comprises 668 residues: Exoribonuclease 2 (668 aa).

Residues 193–521 enclose the RNB domain; that stretch reads RIEMTHVPFV…INHRMLKAVI (329 aa). The region spanning 568 to 650 is the S1 motif domain; it reads QTCFTGEIFD…ENRSLVAKPT (83 aa).

This sequence belongs to the RNR ribonuclease family. RNase II subfamily.

The protein resides in the cytoplasm. It catalyses the reaction Exonucleolytic cleavage in the 3'- to 5'-direction to yield nucleoside 5'-phosphates.. Involved in mRNA degradation. Hydrolyzes single-stranded polyribonucleotides processively in the 3' to 5' direction. This Vibrio parahaemolyticus serotype O3:K6 (strain RIMD 2210633) protein is Exoribonuclease 2.